The following is a 188-amino-acid chain: Putative manganese efflux pump MntP (188 aa).

6 consecutive transmembrane segments (helical) span residues 3–23 (ISATILLAFGMSMDAFAASIG), 41–61 (LIFGAIETLTPLIGWSLGMLA), 62–82 (SQFILEWNHWIAFTLLVFLGG), 106–128 (WILVTTAIATSLDAMAVGVGLAF), 143–163 (ATLIMSTIGMMVGRFIGPLLG), and 168–188 (ILGGIVLIGIGGQILWSHFAG).

The protein belongs to the MntP (TC 9.B.29) family.

It localises to the cell inner membrane. Functionally, probably functions as a manganese efflux pump. This chain is Putative manganese efflux pump MntP, found in Enterobacter sp. (strain 638).